The sequence spans 548 residues: Chaperonin GroEL (548 aa).

Residues 30-33 (TLGP), Lys51, 87-91 (DGTTT), Gly415, 478-480 (NAA), and Asp494 each bind ATP.

This sequence belongs to the chaperonin (HSP60) family. In terms of assembly, forms a cylinder of 14 subunits composed of two heptameric rings stacked back-to-back. Interacts with the co-chaperonin GroES.

The protein resides in the cytoplasm. The enzyme catalyses ATP + H2O + a folded polypeptide = ADP + phosphate + an unfolded polypeptide.. Its function is as follows. Together with its co-chaperonin GroES, plays an essential role in assisting protein folding. The GroEL-GroES system forms a nano-cage that allows encapsulation of the non-native substrate proteins and provides a physical environment optimized to promote and accelerate protein folding. The protein is Chaperonin GroEL of Trichlorobacter lovleyi (strain ATCC BAA-1151 / DSM 17278 / SZ) (Geobacter lovleyi).